The following is a 154-amino-acid chain: 6,7-dimethyl-8-ribityllumazine synthase (154 aa).

5-amino-6-(D-ribitylamino)uracil is bound by residues phenylalanine 26, alanine 60–glutamate 62, and cysteine 84–isoleucine 86. Glutamate 89–threonine 90 contacts (2S)-2-hydroxy-3-oxobutyl phosphate. Histidine 92 functions as the Proton donor in the catalytic mechanism. Position 117 (asparagine 117) interacts with 5-amino-6-(D-ribitylamino)uracil. Arginine 131 is a binding site for (2S)-2-hydroxy-3-oxobutyl phosphate.

It belongs to the DMRL synthase family.

It catalyses the reaction (2S)-2-hydroxy-3-oxobutyl phosphate + 5-amino-6-(D-ribitylamino)uracil = 6,7-dimethyl-8-(1-D-ribityl)lumazine + phosphate + 2 H2O + H(+). Its pathway is cofactor biosynthesis; riboflavin biosynthesis; riboflavin from 2-hydroxy-3-oxobutyl phosphate and 5-amino-6-(D-ribitylamino)uracil: step 1/2. In terms of biological role, catalyzes the formation of 6,7-dimethyl-8-ribityllumazine by condensation of 5-amino-6-(D-ribitylamino)uracil with 3,4-dihydroxy-2-butanone 4-phosphate. This is the penultimate step in the biosynthesis of riboflavin. This chain is 6,7-dimethyl-8-ribityllumazine synthase, found in Paracidovorax citrulli (strain AAC00-1) (Acidovorax citrulli).